A 200-amino-acid chain; its full sequence is DNA-directed RNA polymerase subunit 7-like protein (200 aa).

The protein belongs to the eukaryotic RPB7/RPC8 RNA polymerase subunit family.

Its subcellular location is the nucleus. The sequence is that of DNA-directed RNA polymerase subunit 7-like protein (NRPB7L) from Arabidopsis thaliana (Mouse-ear cress).